The sequence spans 218 residues: ATP synthase subunit a (218 aa).

Helical transmembrane passes span 17–37, 75–95, 104–124, 162–184, and 196–216; these read IYST…GIFL, YLPL…SWFI, DLST…IFGI, LFGN…PFLL, and GTIQ…NFVH.

Belongs to the ATPase A chain family. As to quaternary structure, F-type ATPases have 2 components, CF(1) - the catalytic core - and CF(0) - the membrane proton channel. CF(1) has five subunits: alpha(3), beta(3), gamma(1), delta(1), epsilon(1). CF(0) has three main subunits: a(1), b(2) and c(9-12). The alpha and beta chains form an alternating ring which encloses part of the gamma chain. CF(1) is attached to CF(0) by a central stalk formed by the gamma and epsilon chains, while a peripheral stalk is formed by the delta and b chains. In this bacterium the a and b subunits are transcribed but do not seem to be translated, thus the ATP synthase consists of the alpha, beta, gamma, delta, epsilon and c subunits.

The protein localises to the cell membrane. Its function is as follows. Key component of the proton channel; it plays a direct role in the translocation of protons across the membrane. This is ATP synthase subunit a from Moorella thermoacetica (strain ATCC 39073 / JCM 9320).